Reading from the N-terminus, the 154-residue chain is 17.8 kDa class I heat shock protein (154 aa).

The region spanning 40 to 154 is the sHSP domain; it reads ESSAFANTRI…PEVKSIEISG (115 aa).

This sequence belongs to the small heat shock protein (HSP20) family. Forms oligomeric structures.

It is found in the cytoplasm. In Solanum lycopersicum (Tomato), this protein is 17.8 kDa class I heat shock protein.